We begin with the raw amino-acid sequence, 154 residues long: Myoglobin (154 aa).

In terms of domain architecture, Globin spans 2–148 (VLSDAEWQLV…FRKDIAAKYK (147 aa)). At Ser4 the chain carries Phosphoserine. Residue His65 participates in nitrite binding. His65 is a binding site for O2. A Phosphothreonine modification is found at Thr68. His94 provides a ligand contact to heme b.

It belongs to the globin family. In terms of assembly, monomeric.

The protein resides in the cytoplasm. Its subcellular location is the sarcoplasm. The enzyme catalyses Fe(III)-heme b-[protein] + nitric oxide + H2O = Fe(II)-heme b-[protein] + nitrite + 2 H(+). The catalysed reaction is H2O2 + AH2 = A + 2 H2O. Monomeric heme protein which primary function is to store oxygen and facilitate its diffusion within muscle tissues. Reversibly binds oxygen through a pentacoordinated heme iron and enables its timely and efficient release as needed during periods of heightened demand. Depending on the oxidative conditions of tissues and cells, and in addition to its ability to bind oxygen, it also has a nitrite reductase activity whereby it regulates the production of bioactive nitric oxide. Under stress conditions, like hypoxia and anoxia, it also protects cells against reactive oxygen species thanks to its pseudoperoxidase activity. This is Myoglobin (MB) from Eschrichtius robustus (California gray whale).